The sequence spans 234 residues: Peptidyl-tRNA hydrolase (234 aa).

Residue Y14 coordinates tRNA. Catalysis depends on H19, which acts as the Proton acceptor. Residues F64, N66, and N112 each contribute to the tRNA site. Positions 187-234 (TGTKADEEKPKPAKSHIHQARNGVQPKKLPETGPMAEMLKKMFGPKKD) are disordered.

It belongs to the PTH family. As to quaternary structure, monomer.

The protein localises to the cytoplasm. The enzyme catalyses an N-acyl-L-alpha-aminoacyl-tRNA + H2O = an N-acyl-L-amino acid + a tRNA + H(+). Its function is as follows. Hydrolyzes ribosome-free peptidyl-tRNAs (with 1 or more amino acids incorporated), which drop off the ribosome during protein synthesis, or as a result of ribosome stalling. Functionally, catalyzes the release of premature peptidyl moieties from peptidyl-tRNA molecules trapped in stalled 50S ribosomal subunits, and thus maintains levels of free tRNAs and 50S ribosomes. The chain is Peptidyl-tRNA hydrolase from Allorhizobium ampelinum (strain ATCC BAA-846 / DSM 112012 / S4) (Agrobacterium vitis (strain S4)).